Here is a 538-residue protein sequence, read N- to C-terminus: UPF0761 membrane protein PsycPRwf_0630 (538 aa).

6 helical membrane passes run 43-63 (LLSI…VPAL), 100-120 (LTAI…TTIE), 143-163 (WTII…SSAV), 183-203 (WVQV…YWFI), 215-235 (IAGV…GIIM), and 247-267 (AFAA…LILL). The disordered stretch occupies residues 427 to 538 (SVFSAQDADA…IITEDDNPNK (112 aa)). Residues 482 to 493 (PPDADIKAAAAK) show a composition bias toward low complexity. A compositionally biased stretch (basic and acidic residues) spans 503–514 (KHTETAKQEHKK).

Belongs to the UPF0761 family.

The protein resides in the cell inner membrane. The chain is UPF0761 membrane protein PsycPRwf_0630 from Psychrobacter sp. (strain PRwf-1).